Consider the following 1035-residue polypeptide: Protein SEY1 homolog (1035 aa).

Positions 32–267 (DGTFICVSVF…TTLIPLTDSS (236 aa)) constitute a GB1/RHD3-type G domain. Residue 42 to 49 (GPQSSGKS) coordinates GTP.

The protein belongs to the TRAFAC class dynamin-like GTPase superfamily. GB1/RHD3 GTPase family. RHD3 subfamily.

The protein localises to the endoplasmic reticulum membrane. Probable GTP-binding protein that may be involved in cell development. The protein is Protein SEY1 homolog of Giardia intestinalis (strain ATCC 50803 / WB clone C6) (Giardia lamblia).